The following is a 185-amino-acid chain: Potassium-transporting ATPase KdpC subunit (185 aa).

The chain crosses the membrane as a helical span at residues Ala-14–Ile-34. A disordered region spans residues Ala-105–Ser-128.

Belongs to the KdpC family. As to quaternary structure, the system is composed of three essential subunits: KdpA, KdpB and KdpC.

It localises to the cell inner membrane. Functionally, part of the high-affinity ATP-driven potassium transport (or Kdp) system, which catalyzes the hydrolysis of ATP coupled with the electrogenic transport of potassium into the cytoplasm. This subunit acts as a catalytic chaperone that increases the ATP-binding affinity of the ATP-hydrolyzing subunit KdpB by the formation of a transient KdpB/KdpC/ATP ternary complex. This Cereibacter sphaeroides (strain ATCC 17029 / ATH 2.4.9) (Rhodobacter sphaeroides) protein is Potassium-transporting ATPase KdpC subunit.